The following is a 74-amino-acid chain: uncharacterized protein (74 aa).

This is an uncharacterized protein from Avena sativa (Oat).